Here is a 226-residue protein sequence, read N- to C-terminus: Glutathione peroxidase 3 (226 aa).

Positions 1–24 (MARILRASCLLSLLLAGFVPPGRG) are cleaved as a signal peptide. Sec73 is an active-site residue. Position 73 (Sec73) is a non-standard amino acid, selenocysteine.

It belongs to the glutathione peroxidase family. In terms of assembly, homotetramer. Secreted in plasma.

It localises to the secreted. It carries out the reaction 2 glutathione + H2O2 = glutathione disulfide + 2 H2O. The catalysed reaction is tert-butyl hydroperoxide + 2 glutathione = tert-butanol + glutathione disulfide + H2O. In terms of biological role, protects cells and enzymes from oxidative damage, by catalyzing the reduction of hydrogen peroxide, lipid peroxides and organic hydroperoxide, by glutathione. This chain is Glutathione peroxidase 3, found in Mus musculus (Mouse).